The chain runs to 888 residues: Valine--tRNA ligase (888 aa).

Positions 43–53 (PNVTGTLHLGH) match the 'HIGH' region motif. The 'KMSKS' region signature appears at 538 to 542 (KMSKS). Lysine 541 contacts ATP. The stretch at 821–888 (LIDLDAERAR…RLKAALGRLA (68 aa)) forms a coiled coil.

This sequence belongs to the class-I aminoacyl-tRNA synthetase family. ValS type 1 subfamily. As to quaternary structure, monomer.

It localises to the cytoplasm. It catalyses the reaction tRNA(Val) + L-valine + ATP = L-valyl-tRNA(Val) + AMP + diphosphate. Catalyzes the attachment of valine to tRNA(Val). As ValRS can inadvertently accommodate and process structurally similar amino acids such as threonine, to avoid such errors, it has a 'posttransfer' editing activity that hydrolyzes mischarged Thr-tRNA(Val) in a tRNA-dependent manner. This is Valine--tRNA ligase from Gluconobacter oxydans (strain 621H) (Gluconobacter suboxydans).